Here is a 403-residue protein sequence, read N- to C-terminus: MADSVERLRQRVEELEQELARERTRRSGGDGHCGRTRIQEMSDEVLDSNPYSRLMALKRMGIVSDYKKIRTYAVAIVGVGGVGSVTAEMLTRCGIGKLLLFDYDKVELANMNRLFFQPYQAGLSKVHAAEHTLRNINPDVLFEVHNYNITTVEHFEHFMNRISNGGLEEGQPVDLVLSCVDNFEARMAINTACNELGQTWMESGVSENAVSGHIQLMIPGESACFACAPPLVVASNIDEKTLKREGVCAASLPTTMGVVAGILVQNVLKFLLKFGTVSFYLGYNAMQDFFPTMFMKPNPQCDDKNCRKQQEEYKKRAAALPTQEAEPQEEAEVVHEDNEWGIELVSEVSEEELKNSSGPVPTLPEGITVAYTVPKKTEDSASEVTVEDSGESLEDLMARMKNM.

Glycine 81, aspartate 102, lysine 125, asparagine 148, and asparagine 182 together coordinate ATP. Zn(2+) is bound by residues cysteine 224 and cysteine 227. Cysteine 248 serves as the catalytic Glycyl thioester intermediate. Residues cysteine 301 and cysteine 306 each contribute to the Zn(2+) site. A UFM1-interacting sequence (UIS) motif is present at residues 333 to 345; sequence VVHEDNEWGIELV. The linker stretch occupies residues 346-376; it reads SEVSEEELKNSSGPVPTLPEGITVAYTVPKK. Serine 357 and serine 392 each carry phosphoserine. Positions 388–403 match the UFC1-binding sequence (UFC) motif; it reads DSGESLEDLMARMKNM.

It belongs to the ubiquitin-activating E1 family. UBA5 subfamily. As to quaternary structure, homodimer; homodimerization is required for UFM1 activation. Interacts (via UIS motif) with UFM1; binds UFM1 via a trans-binding mechanism in which UFM1 interacts with distinct sites in both subunits of the UBA5 homodimer. Interacts (via C-terminus) with UFC1. Interacts (via UIS motif) with GABARAPL2 and, with lower affinity, with GABARAP and GABARAPL1.

The protein resides in the cytoplasm. It is found in the nucleus. Its subcellular location is the endoplasmic reticulum membrane. It localises to the golgi apparatus. Functionally, E1-like enzyme which specifically catalyzes the first step in ufmylation. Activates UFM1 by first adenylating its C-terminal glycine residue with ATP, and thereafter linking this residue to the side chain of a cysteine residue in E1, yielding a UFM1-E1 thioester and free AMP. Activates UFM1 via a trans-binding mechanism, in which UFM1 interacts with distinct sites in both subunits of the UBA5 homodimer. Trans-binding also promotes stabilization of the UBA5 homodimer, and enhances ATP-binding. Transfer of UFM1 from UBA5 to the E2-like enzyme UFC1 also takes place using a trans mechanism. Ufmylation plays a key role in various processes, such as ribosome recycling, response to DNA damage, interferon response or reticulophagy (also called ER-phagy). Ufmylation is essential for erythroid differentiation of both megakaryocytes and erythrocytes. This chain is Ubiquitin-like modifier-activating enzyme 5, found in Mus musculus (Mouse).